The sequence spans 548 residues: Chaperonin GroEL (548 aa).

Residues 30-33, Lys-51, 87-91, Gly-415, 479-481, and Asp-495 each bind ATP; these read TLGP, DGTTT, and NAA.

The protein belongs to the chaperonin (HSP60) family. In terms of assembly, forms a cylinder of 14 subunits composed of two heptameric rings stacked back-to-back. Interacts with the co-chaperonin GroES.

It localises to the cytoplasm. It catalyses the reaction ATP + H2O + a folded polypeptide = ADP + phosphate + an unfolded polypeptide.. Its function is as follows. Together with its co-chaperonin GroES, plays an essential role in assisting protein folding. The GroEL-GroES system forms a nano-cage that allows encapsulation of the non-native substrate proteins and provides a physical environment optimized to promote and accelerate protein folding. The chain is Chaperonin GroEL from Oleidesulfovibrio alaskensis (strain ATCC BAA-1058 / DSM 17464 / G20) (Desulfovibrio alaskensis).